A 242-amino-acid chain; its full sequence is Platinum sensitivity protein 3 (242 aa).

In terms of assembly, component of the SHU complex composed of at least CSM2, PSY3, SHU1 and SHU2.

The protein resides in the nucleus. Functionally, required for resistance to the DNA-damaging agents methyl methanesulfonate (MMS), cisplatin and oxaliplatin, but not to mitomycin C. Plays a role in protection against mutation accumulation. May be a component of the recombination-repair pathway. The sequence is that of Platinum sensitivity protein 3 (PSY3) from Saccharomyces cerevisiae (strain ATCC 204508 / S288c) (Baker's yeast).